Reading from the N-terminus, the 631-residue chain is ATP-dependent protease PrkA (631 aa).

Phosphothreonine is present on Thr217. A Phosphoserine modification is found at Ser219.

The protein belongs to the PrkA family. Phosphorylated by PrkC on two sites, Thr-217 and Ser-219, with the threonine being the major site of modification.

It localises to the forespore. Its subcellular location is the spore coat. The enzyme catalyses Hydrolysis of proteins in presence of ATP.. With respect to regulation, hydrolase activity is regulated by phosphorylation by the Ser/Thr kinase PrkC, probably allowing fine control of sporulation. Phosphorylation by PrkC does not prevent ATP fixation but it inhibits specifically PrkA protease activity and down-regulates the sporulation processes. Hydrolase activity is inhibited by a protease inhibitor, phenylmethylsulfonyl fluoride (PMSF). Potential kinase activity requires the presence of MgCl(2) and is inhibited in the presence of MnCl(2). In terms of biological role, ATP-dependent protease that regulates sporulation. Is able to bind and hydrolyze ATP. This ATP-dependent protease activity is necessary for efficient sporulation of B.subtilis. In vitro, can hydrolyze alpha-casein, an exogenous substrate of Lon proteases, in an ATP-dependent manner. PrkA also modulates sporulation by negatively regulating the transcriptional regulator Hpr/ScoC to induce the expression of sigK. The control of sporulation mediated via the Hpr/ScoC regulator is probably indirect. PrkA was originally thought to be a protein kinase, as it has been shown to phosphorylate in vitro an unidentified 60 kDa protein from B.subtilis crude extracts at a serine residue. However, Zhang et al. did not observe autophosphorylation or kinase activity for this protein, suggesting that it may have lost its kinase activity during evolution or may be a pseudokinase. The chain is ATP-dependent protease PrkA from Bacillus subtilis (strain 168).